Here is a 221-residue protein sequence, read N- to C-terminus: Beta-phosphoglucomutase (221 aa).

D8 (nucleophile) is an active-site residue. Residues D8 and D10 each contribute to the Mg(2+) site. D8 is subject to 4-aspartylphosphate. D10 acts as the Proton donor/acceptor in catalysis. Beta-D-glucose 6-phosphate contacts are provided by D10, G46, V47, R49, S116, K117, and N118. D170 serves as a coordination point for Mg(2+).

This sequence belongs to the HAD-like hydrolase superfamily. CbbY/CbbZ/Gph/YieH family. Monomer. It depends on Mg(2+) as a cofactor. Post-translationally, autophosphorylated.

It localises to the cytoplasm. The enzyme catalyses beta-D-glucose 1-phosphate = beta-D-glucose 6-phosphate. Its activity is regulated as follows. Activated by phosphorylation. Competitively inhibited by alpha-D-galactose-1-phosphate. Catalyzes the interconversion of D-glucose 1-phosphate (G1P) and D-glucose 6-phosphate (G6P), forming beta-D-glucose 1,6-(bis)phosphate (beta-G16P) as an intermediate. The beta-phosphoglucomutase (Beta-PGM) acts on the beta-C(1) anomer of G1P. Glucose or lactose are used in preference to maltose, which is only utilized after glucose or lactose has been exhausted. It plays a key role in the regulation of the flow of carbohydrate intermediates in glycolysis and the formation of the sugar nucleotide UDP-glucose. The protein is Beta-phosphoglucomutase of Lactococcus lactis subsp. lactis (strain IL1403) (Streptococcus lactis).